A 77-amino-acid chain; its full sequence is Large ribosomal subunit protein bL28 (77 aa).

Belongs to the bacterial ribosomal protein bL28 family.

In Ralstonia pickettii (strain 12J), this protein is Large ribosomal subunit protein bL28.